The sequence spans 729 residues: Bromo and FHA domain-containing protein DDB_G0267958 (729 aa).

A compositionally biased stretch (low complexity) spans 46 to 79; sequence LPIPNTSNTNPPMNQSSSPTTTTTTPTTTTTPTT. The segment at 46-83 is disordered; sequence LPIPNTSNTNPPMNQSSSPTTTTTTPTTTTTPTTAEPA. In terms of domain architecture, FHA spans 112–167; it reads LIIGSDTELADIQVVRPGIYPKHVEIIYDKEKKKFYLNPLIDPKDSDNVRLNFVPF. Composition is skewed to low complexity over residues 208–221, 229–275, and 283–306; these read IPSN…NTPI, PPSS…ATKT, and PTKT…AVKK. Disordered stretches follow at residues 208–361 and 403–442; these read IPSN…MSCK and SRRP…PKVP. Over residues 310–341 the composition is skewed to acidic residues; it reads DDDYGDDYNEEEDDDDEEEEEEEEEEEEEEEV. Residues 315-352 are a coiled coil; it reads DDYNEEEDDDDEEEEEEEEEEEEEEEVESKQIKVVNSK. A compositionally biased stretch (low complexity) spans 406–431; the sequence is PTAPVTPTKPTSTKKVTTPKKATVVK. The Bromo domain maps to 498–617; the sequence is SNEKKEILKC…IELYKALSNS (120 aa). Residues 659–718 are a coiled coil; that stretch reads SKNKEQTVPQEEDEEEEEEEEEEEEEEEEGEEGKEDEEEEEKEEEEGEENEEEEDVEIDD. The tract at residues 659–729 is disordered; it reads SKNKEQTVPQ…EIDQESDDDQ (71 aa). Over residues 668 to 729 the composition is skewed to acidic residues; it reads QEEDEEEEEE…EIDQESDDDQ (62 aa).

The polypeptide is Bromo and FHA domain-containing protein DDB_G0267958 (Dictyostelium discoideum (Social amoeba)).